The sequence spans 98 residues: NADH-ubiquinone oxidoreductase chain 4L (98 aa).

3 consecutive transmembrane segments (helical) span residues 1–21 (MSLT…GLLM), 29–49 (SLLC…ITIL), and 61–81 (IILL…LVMV).

The protein belongs to the complex I subunit 4L family. In terms of assembly, core subunit of respiratory chain NADH dehydrogenase (Complex I) which is composed of 45 different subunits.

It localises to the mitochondrion inner membrane. It catalyses the reaction a ubiquinone + NADH + 5 H(+)(in) = a ubiquinol + NAD(+) + 4 H(+)(out). Core subunit of the mitochondrial membrane respiratory chain NADH dehydrogenase (Complex I) which catalyzes electron transfer from NADH through the respiratory chain, using ubiquinone as an electron acceptor. Part of the enzyme membrane arm which is embedded in the lipid bilayer and involved in proton translocation. The protein is NADH-ubiquinone oxidoreductase chain 4L (MT-ND4L) of Mystacina tuberculata (New Zealand lesser short-tailed bat).